The chain runs to 121 residues: Small ribosomal subunit protein uS13 (121 aa).

The disordered stretch occupies residues 97–121; sequence VRGQRTRTNARTRRGARKTVAGKKK. Residues 100-121 show a composition bias toward basic residues; sequence QRTRTNARTRRGARKTVAGKKK.

It belongs to the universal ribosomal protein uS13 family. As to quaternary structure, part of the 30S ribosomal subunit. Forms a loose heterodimer with protein S19. Forms two bridges to the 50S subunit in the 70S ribosome.

Located at the top of the head of the 30S subunit, it contacts several helices of the 16S rRNA. In the 70S ribosome it contacts the 23S rRNA (bridge B1a) and protein L5 of the 50S subunit (bridge B1b), connecting the 2 subunits; these bridges are implicated in subunit movement. Contacts the tRNAs in the A and P-sites. This Synechococcus sp. (strain CC9311) protein is Small ribosomal subunit protein uS13.